The chain runs to 98 residues: DNA-binding protein Fis (98 aa).

Positions 74-93 form a DNA-binding region, H-T-H motif; it reads QTRAATMLGINRGTLRKKLK.

This sequence belongs to the transcriptional regulatory Fis family. As to quaternary structure, homodimer.

Activates ribosomal RNA transcription. Plays a direct role in upstream activation of rRNA promoters. The chain is DNA-binding protein Fis from Histophilus somni (strain 2336) (Haemophilus somnus).